Here is a 262-residue protein sequence, read N- to C-terminus: Type III pantothenate kinase (262 aa).

Position 9-16 (9-16 (DIGNTNIV)) interacts with ATP. Substrate is bound by residues Y103 and 110–113 (GVDR). D112 functions as the Proton acceptor in the catalytic mechanism. D132 provides a ligand contact to K(+). T135 is an ATP binding site. A substrate-binding site is contributed by T187.

It belongs to the type III pantothenate kinase family. As to quaternary structure, homodimer. Requires NH4(+) as cofactor. It depends on K(+) as a cofactor.

The protein localises to the cytoplasm. It carries out the reaction (R)-pantothenate + ATP = (R)-4'-phosphopantothenate + ADP + H(+). The protein operates within cofactor biosynthesis; coenzyme A biosynthesis; CoA from (R)-pantothenate: step 1/5. Catalyzes the phosphorylation of pantothenate (Pan), the first step in CoA biosynthesis. This chain is Type III pantothenate kinase, found in Finegoldia magna (strain ATCC 29328 / DSM 20472 / WAL 2508) (Peptostreptococcus magnus).